The following is a 324-amino-acid chain: Tetrahydromethanopterin:alpha-L-glutamate ligase (324 aa).

The region spanning 113 to 321 is the ATP-grasp domain; that stretch reads SYLLARAGLP…PAEYILEYLQ (209 aa). Residues lysine 148, 195 to 204, and arginine 220 each bind ATP; that span reads QEFIENPGRD. Aspartate 265 contacts Mg(2+). A Mn(2+)-binding site is contributed by aspartate 265. The interval 274–293 is disordered; sequence TGNENKKTEDKSTGQGSRIL. Mg(2+)-binding residues include glutamate 294 and asparagine 296. Mn(2+) contacts are provided by glutamate 294 and asparagine 296.

The protein belongs to the RimK family. MptN subfamily. In terms of assembly, homodimer. Requires Mg(2+) as cofactor. Mn(2+) is required as a cofactor.

It catalyses the reaction 5,6,7,8-tetrahydromethanopterin + L-glutamate + ATP = 5,6,7,8-tetrahydrosarcinapterin + ADP + phosphate + H(+). It participates in cofactor biosynthesis; 5,6,7,8-tetrahydrosarcinapterin biosynthesis. Functionally, catalyzes the ATP or GTP-dependent addition of one L-glutamate molecule to tetrahydromethanopterin, producing tetrahydrosarcinapterin. This is Tetrahydromethanopterin:alpha-L-glutamate ligase (mptN) from Methanosarcina acetivorans (strain ATCC 35395 / DSM 2834 / JCM 12185 / C2A).